We begin with the raw amino-acid sequence, 131 residues long: Putative gamma-taxilin 2 (131 aa).

This sequence belongs to the taxilin family. Ubiquitously expressed.

This chain is Putative gamma-taxilin 2 (TXLNGY), found in Homo sapiens (Human).